Consider the following 72-residue polypeptide: Translation initiation factor IF-1 (72 aa).

The 72-residue stretch at Met1–Lys72 folds into the S1-like domain. Residue Tyr60 is modified to Phosphotyrosine.

It belongs to the IF-1 family. In terms of assembly, component of the 30S ribosomal translation pre-initiation complex which assembles on the 30S ribosome in the order IF-2 and IF-3, IF-1 and N-formylmethionyl-tRNA(fMet); mRNA recruitment can occur at any time during PIC assembly.

It localises to the cytoplasm. In terms of biological role, one of the essential components for the initiation of protein synthesis. Stabilizes the binding of IF-2 and IF-3 on the 30S subunit to which N-formylmethionyl-tRNA(fMet) subsequently binds. Helps modulate mRNA selection, yielding the 30S pre-initiation complex (PIC). Upon addition of the 50S ribosomal subunit IF-1, IF-2 and IF-3 are released leaving the mature 70S translation initiation complex. This Bacillus thuringiensis (strain Al Hakam) protein is Translation initiation factor IF-1.